A 144-amino-acid polypeptide reads, in one-letter code: 3-hydroxyacyl-[acyl-carrier-protein] dehydratase FabZ (144 aa).

The active site involves histidine 51.

It belongs to the thioester dehydratase family. FabZ subfamily.

Its subcellular location is the cytoplasm. The enzyme catalyses a (3R)-hydroxyacyl-[ACP] = a (2E)-enoyl-[ACP] + H2O. Functionally, involved in unsaturated fatty acids biosynthesis. Catalyzes the dehydration of short chain beta-hydroxyacyl-ACPs and long chain saturated and unsaturated beta-hydroxyacyl-ACPs. The chain is 3-hydroxyacyl-[acyl-carrier-protein] dehydratase FabZ (fabZ2) from Lactococcus lactis subsp. lactis (strain IL1403) (Streptococcus lactis).